The primary structure comprises 69 residues: uncharacterized protein (69 aa).

The first 21 residues, 1–21 (MNTKFILILLVLIISTIFVNS), serve as a signal peptide directing secretion.

Its subcellular location is the secreted. This is an uncharacterized protein from Dictyostelium discoideum (Social amoeba).